Reading from the N-terminus, the 78-residue chain is D-alanyl carrier protein (78 aa).

One can recognise a Carrier domain in the interval 1–78 (MAFRENVLEI…MIITQLEALK (78 aa)). S36 carries the O-(pantetheine 4'-phosphoryl)serine modification.

The protein belongs to the DltC family. 4'-phosphopantetheine is transferred from CoA to a specific serine of apo-DCP.

It is found in the cytoplasm. It functions in the pathway cell wall biogenesis; lipoteichoic acid biosynthesis. Functionally, carrier protein involved in the D-alanylation of lipoteichoic acid (LTA). The loading of thioester-linked D-alanine onto DltC is catalyzed by D-alanine--D-alanyl carrier protein ligase DltA. The DltC-carried D-alanyl group is further transferred to cell membrane phosphatidylglycerol (PG) by forming an ester bond, probably catalyzed by DltD. D-alanylation of LTA plays an important role in modulating the properties of the cell wall in Gram-positive bacteria, influencing the net charge of the cell wall. The chain is D-alanyl carrier protein from Listeria monocytogenes serotype 4a (strain HCC23).